A 155-amino-acid polypeptide reads, in one-letter code: Transcriptional repressor NrdR (155 aa).

Positions 1–10 are enriched in basic residues; the sequence is MQCPHCHHNS. The tract at residues 1 to 21 is disordered; that stretch reads MQCPHCHHNSSRVVDSRPTDG. The segment at 3 to 34 is a zinc-finger region; that stretch reads CPHCHHNSSRVVDSRPTDGGRAIRRRRECENC. In terms of domain architecture, ATP-cone spans 49 to 139; it reads LLVIKKNGTR…VYRQFKDMSV (91 aa).

The protein belongs to the NrdR family. Requires Zn(2+) as cofactor.

Negatively regulates transcription of bacterial ribonucleotide reductase nrd genes and operons by binding to NrdR-boxes. The sequence is that of Transcriptional repressor NrdR from Lacticaseibacillus casei (strain BL23) (Lactobacillus casei).